We begin with the raw amino-acid sequence, 197 residues long: ADP-ribosylation factor 1 (197 aa).

Gly-2 is lipidated: N-myristoyl glycine. GTP is bound by residues 24–31 (GLDAAGKT), 67–71 (DVGGQ), and 126–129 (NKQD).

Belongs to the small GTPase superfamily. Arf family.

It is found in the golgi apparatus. The catalysed reaction is GTP + H2O = GDP + phosphate + H(+). In terms of biological role, GTP-binding protein involved in protein trafficking; may modulate vesicle budding and uncoating within the Golgi apparatus. The polypeptide is ADP-ribosylation factor 1 (Solanum tuberosum (Potato)).